The primary structure comprises 152 residues: MAPKAEKKPAEKKPAAGEEKSAEKAPAGKKPKAEKRLPASKASSKEGGAGDKKGRKKAKKSVETYKIYIFKVLKQVHPDIGISSKAMSIMNSFINDIFEKLAQEAARLARYNKKPTITSREIQTSVRLVLPGELAKHAVSEGTKAVTKFTSN.

The segment covering 1–23 has biased composition (basic and acidic residues); that stretch reads MAPKAEKKPAEKKPAAGEEKSAE. The disordered stretch occupies residues 1 to 60; it reads MAPKAEKKPAEKKPAAGEEKSAEKAPAGKKPKAEKRLPASKASSKEGGAGDKKGRKKAKK. Residues Lys-7 and Lys-35 each carry the N6-acetyllysine modification. Lys-148 participates in a covalent cross-link: Glycyl lysine isopeptide (Lys-Gly) (interchain with G-Cter in ubiquitin).

This sequence belongs to the histone H2B family. The nucleosome is a histone octamer containing two molecules each of H2A, H2B, H3 and H4 assembled in one H3-H4 heterotetramer and two H2A-H2B heterodimers. The octamer wraps approximately 147 bp of DNA. In terms of processing, can be acetylated to form H2BK6ac and H2BK33ac. Post-translationally, monoubiquitinated by BRE1 to form H2BK143ub1 and deubiquitinated by UBP26. Required for heterochromatic histone H3 di- and trimethylation at H3K4me. May give a specific tag for epigenetic transcriptional activation.

The protein localises to the nucleus. Its subcellular location is the chromosome. Functionally, core component of nucleosome. Nucleosomes wrap and compact DNA into chromatin, limiting DNA accessibility to the cellular machineries which require DNA as a template. Histones thereby play a central role in transcription regulation, DNA repair, DNA replication and chromosomal stability. DNA accessibility is regulated via a complex set of post-translational modifications of histones, also called histone code, and nucleosome remodeling. This Oryza sativa subsp. indica (Rice) protein is Histone H2B.1.